Consider the following 141-residue polypeptide: Actin-depolymerizing factor 9 (141 aa).

S8 is subject to Phosphoserine. The ADF-H domain occupies 8–141 (SGMWMTDDCK…GFDKIQDRAK (134 aa)).

This sequence belongs to the actin-binding proteins ADF family.

The protein resides in the cytoplasm. It is found in the cytoskeleton. Its function is as follows. Does not display typical F-actin depolymerizing activity. Exhibits a high ability to stabilize and cross-link actin filaments. Functions as an actin bundling protein with the highest efficiency under acidic conditions. May play a role in the modulation of levels of histone H3 lysine 4 trimethylation and H3 lysine 9 and 14 acetylation at the FLC locus. In Arabidopsis thaliana (Mouse-ear cress), this protein is Actin-depolymerizing factor 9 (ADF9).